Consider the following 202-residue polypeptide: Small ribosomal subunit protein uS4c (202 aa).

One can recognise an S4 RNA-binding domain in the interval 90–153 (MRLDNVIFRL…KSETIISKNI (64 aa)).

Belongs to the universal ribosomal protein uS4 family. In terms of assembly, part of the 30S ribosomal subunit. Contacts protein S5. The interaction surface between S4 and S5 is involved in control of translational fidelity.

Its subcellular location is the plastid. The protein localises to the chloroplast. Its function is as follows. One of the primary rRNA binding proteins, it binds directly to 16S rRNA where it nucleates assembly of the body of the 30S subunit. In terms of biological role, with S5 and S12 plays an important role in translational accuracy. The sequence is that of Small ribosomal subunit protein uS4c (rps4) from Arbusculohypopterygium arbuscula (Moss).